The sequence spans 95 residues: Aspartyl/glutamyl-tRNA(Asn/Gln) amidotransferase subunit C (95 aa).

The protein belongs to the GatC family. In terms of assembly, heterotrimer of A, B and C subunits.

The catalysed reaction is L-glutamyl-tRNA(Gln) + L-glutamine + ATP + H2O = L-glutaminyl-tRNA(Gln) + L-glutamate + ADP + phosphate + H(+). The enzyme catalyses L-aspartyl-tRNA(Asn) + L-glutamine + ATP + H2O = L-asparaginyl-tRNA(Asn) + L-glutamate + ADP + phosphate + 2 H(+). Its function is as follows. Allows the formation of correctly charged Asn-tRNA(Asn) or Gln-tRNA(Gln) through the transamidation of misacylated Asp-tRNA(Asn) or Glu-tRNA(Gln) in organisms which lack either or both of asparaginyl-tRNA or glutaminyl-tRNA synthetases. The reaction takes place in the presence of glutamine and ATP through an activated phospho-Asp-tRNA(Asn) or phospho-Glu-tRNA(Gln). This Rhodospirillum centenum (strain ATCC 51521 / SW) protein is Aspartyl/glutamyl-tRNA(Asn/Gln) amidotransferase subunit C.